The primary structure comprises 288 residues: MAWRDRRGALRAILTGSACVRPASVYDAISIRIADDLGFPFGMFGGSVASLAILGDPDIALITLTELAEQVRRMSRAAALPVVVDADHGYGNALNVRRTVEELEAAGAAGLTIEDTLLPQAYGEAKPQLVSREEGLGKIKAALDARRDPNLVIIGRTGACSITSLDDAIERALAYQAAGVDALFFTGVKTRAQLEAISAATTLPIALGSPPAELGDFDHLAERRVRIAVQGHAPIAAATEAVFKTLSAIKDGAAPKALTGLASAELMDKVTRADVVAERGEHFLGVKR.

Ser47 is a substrate binding site. Asp85 serves as a coordination point for Mg(2+). Positions 156 and 232 each coordinate substrate.

The protein belongs to the isocitrate lyase/PEP mutase superfamily. Oxaloacetate decarboxylase family. In terms of assembly, homotetramer; dimer of dimers. The cofactor is Mg(2+).

The enzyme catalyses oxaloacetate + H(+) = pyruvate + CO2. Its function is as follows. Catalyzes the decarboxylation of oxaloacetate into pyruvate. Seems to play a role in maintaining cellular concentrations of bicarbonate and pyruvate. The polypeptide is Oxaloacetate decarboxylase (Rhodopseudomonas palustris (strain ATCC BAA-98 / CGA009)).